The following is a 344-amino-acid chain: Lipase chaperone (344 aa).

The chain crosses the membrane as a helical span at residues 14–34 (AAIYGGVGLAAVAGVAMWSGA).

This sequence belongs to the lipase chaperone family.

The protein localises to the cell inner membrane. In terms of biological role, may be involved in the folding of the extracellular lipase during its passage through the periplasm. This is Lipase chaperone from Burkholderia cenocepacia (strain ATCC BAA-245 / DSM 16553 / LMG 16656 / NCTC 13227 / J2315 / CF5610) (Burkholderia cepacia (strain J2315)).